The chain runs to 182 residues: Sec-independent protein translocase protein TatB (182 aa).

A helical transmembrane segment spans residues 1 to 21 (MFDIGFSELLLVFVIGLIVLG). 2 disordered regions span residues 87 to 107 (QAAESMKRTYSANDPEQASDE) and 121 to 182 (TQHE…SDKP). Residues 168–182 (AAPVVESSPSSSDKP) show a composition bias toward low complexity.

Belongs to the TatB family. The Tat system comprises two distinct complexes: a TatABC complex, containing multiple copies of TatA, TatB and TatC subunits, and a separate TatA complex, containing only TatA subunits. Substrates initially bind to the TatABC complex, which probably triggers association of the separate TatA complex to form the active translocon.

The protein resides in the cell inner membrane. Functionally, part of the twin-arginine translocation (Tat) system that transports large folded proteins containing a characteristic twin-arginine motif in their signal peptide across membranes. Together with TatC, TatB is part of a receptor directly interacting with Tat signal peptides. TatB may form an oligomeric binding site that transiently accommodates folded Tat precursor proteins before their translocation. The chain is Sec-independent protein translocase protein TatB from Salmonella choleraesuis (strain SC-B67).